Here is a 566-residue protein sequence, read N- to C-terminus: Liver carboxylesterase (566 aa).

Positions 1–18 (MWLLPLVLTSLASSATWA) are cleaved as a signal peptide. Asparagine 80 carries N-linked (GlcNAc...) asparagine glycosylation. A disulfide bridge connects residues cysteine 88 and cysteine 117. Residue serine 222 is the Acyl-ester intermediate of the active site. Cysteine 274 and cysteine 285 are oxidised to a cystine. The active-site Charge relay system is the glutamate 354. Position 379 is a phosphoserine (serine 379). The Charge relay system role is filled by histidine 467. Residues 563–566 (HAEL) carry the Prevents secretion from ER motif.

This sequence belongs to the type-B carboxylesterase/lipase family.

It localises to the endoplasmic reticulum lumen. It catalyses the reaction a carboxylic ester + H2O = an alcohol + a carboxylate + H(+). With respect to regulation, activated by CHAPS at concentrations of up to 130 mM, higher concentrations reduce activity. In the presence of CHAPS, activity is stimulated by non-ionic detergents. Inhibited by the esterase inhibitors diisopropylfluorophosphate and phenylmethylsulfonyl fluoride. Functionally, involved in the detoxification of xenobiotics and in the activation of ester and amide prodrugs. Active towards triacylglycerides containing short-chain fatty acids from C2 to C6, and 1(3)-monoacylglycerols containing fatty acids from C2 to C12. Inactive on long-chain triacylglycerols and diacylglycerol. Hydrolyzes aromatic and alkyl esters and vitamin A acetate. The hydrolysis rate depends upon the amino acid promoiety and the esterification site of the prodrug. Aromatic promoieties are favored, highest rates are observed with phenylalanyl progdrugs, hydrolysis of valyl and isoleucyl prodrugs is less efficient. With floxuridine prodrugs, activity is higher on 5' monoesters than on 3' monoesters. With gemcitabine prodrugs, activity is higher on 3' monoesters than on 5' monoesters. This chain is Liver carboxylesterase, found in Sus scrofa (Pig).